The sequence spans 157 residues: SsrA-binding protein (157 aa).

Residues 135-157 (KRDTIKDREGKREVERAMKTNHR) are disordered.

Belongs to the SmpB family.

It is found in the cytoplasm. Its function is as follows. Required for rescue of stalled ribosomes mediated by trans-translation. Binds to transfer-messenger RNA (tmRNA), required for stable association of tmRNA with ribosomes. tmRNA and SmpB together mimic tRNA shape, replacing the anticodon stem-loop with SmpB. tmRNA is encoded by the ssrA gene; the 2 termini fold to resemble tRNA(Ala) and it encodes a 'tag peptide', a short internal open reading frame. During trans-translation Ala-aminoacylated tmRNA acts like a tRNA, entering the A-site of stalled ribosomes, displacing the stalled mRNA. The ribosome then switches to translate the ORF on the tmRNA; the nascent peptide is terminated with the 'tag peptide' encoded by the tmRNA and targeted for degradation. The ribosome is freed to recommence translation, which seems to be the essential function of trans-translation. The polypeptide is SsrA-binding protein (Albidiferax ferrireducens (strain ATCC BAA-621 / DSM 15236 / T118) (Rhodoferax ferrireducens)).